The following is a 218-amino-acid chain: Ribose-5-phosphate isomerase A (218 aa).

Substrate is bound by residues 27-30, 80-83, and 93-96; these read TGST, DGAD, and KGGG. Catalysis depends on E102, which acts as the Proton acceptor. K120 contacts substrate.

This sequence belongs to the ribose 5-phosphate isomerase family. Homodimer.

The catalysed reaction is aldehydo-D-ribose 5-phosphate = D-ribulose 5-phosphate. It functions in the pathway carbohydrate degradation; pentose phosphate pathway; D-ribose 5-phosphate from D-ribulose 5-phosphate (non-oxidative stage): step 1/1. In terms of biological role, catalyzes the reversible conversion of ribose-5-phosphate to ribulose 5-phosphate. The polypeptide is Ribose-5-phosphate isomerase A (Thiobacillus denitrificans (strain ATCC 25259 / T1)).